A 215-amino-acid polypeptide reads, in one-letter code: MNAPALSPARRTKKLPPLRVGIGGPVGSGKTTLLEMLCKAMRERYDLVAITNDIYTKEDQRLLTVAGALPEERIMGVETGGCPHTAIREDASINLEAVDRMLSRFPDADIVFIESGGDNLAATFSPELSDLTIYVIDVAGGEKIPRKGGPGITKSDLLVINKTDLAPLVGANLDVMASDTKKMRGERPYVMTNLKALDGVADVVAFIEKKGLLTV.

GTP is bound at residue 24–31; that stretch reads GPVGSGKT.

It belongs to the SIMIBI class G3E GTPase family. UreG subfamily. In terms of assembly, homodimer. UreD, UreF and UreG form a complex that acts as a GTP-hydrolysis-dependent molecular chaperone, activating the urease apoprotein by helping to assemble the nickel containing metallocenter of UreC. The UreE protein probably delivers the nickel.

The protein localises to the cytoplasm. Functionally, facilitates the functional incorporation of the urease nickel metallocenter. This process requires GTP hydrolysis, probably effectuated by UreG. This is Urease accessory protein UreG from Burkholderia ambifaria (strain ATCC BAA-244 / DSM 16087 / CCUG 44356 / LMG 19182 / AMMD) (Burkholderia cepacia (strain AMMD)).